A 411-amino-acid chain; its full sequence is Putative competence-damage inducible protein (411 aa).

Belongs to the CinA family.

In Alkaliphilus metalliredigens (strain QYMF), this protein is Putative competence-damage inducible protein.